The following is a 1249-amino-acid chain: Voltage-dependent calcium channel unc-36 (1249 aa).

The signal sequence occupies residues 1–19 (MRVVHLLVVLATYVSTTSS). The Extracellular segment spans residues 20-1228 (FNKESIKECA…SENERRPCST (1209 aa)). Residues N100, N140, N146, N302, N520, N558, N757, N838, N903, N923, and N1130 are each glycosylated (N-linked (GlcNAc...) asparagine). Positions 250 to 479 (NVLIMLDMSG…EKIHHYIRRM (230 aa)) constitute a VWFA domain. Residues 1229-1248 (SPTIVSIFQILFGVFLHFCI) traverse the membrane as a helical segment. A topological domain (cytoplasmic) is located at residue F1249.

In terms of tissue distribution, decendants of the cells AB and AB.p (that give rise to nearly all non-pharyngeal neurons), decendants of P1 (that give rise to body muscle) and cell lineages that give rise to the adult and juvenile motor neurons. Expressed in body wall, vulval muscle and pharyngeal muscle.

It localises to the membrane. Functionally, may act as an auxiliary subunit of the unc-2 voltage-gated calcium channel which appears to trigger calcium-activated signaling pathways that control the serotonin response. Inhibiting serotonin sensitivity of the vulval muscles results in egg laying defects. May act in both neurons and muscle cells to enhance motor activity as it is required for coordinated movement. Has a role in neural depolarization-induced calcium influx and pharyngeal pumping. Involved in restricting the expression of the putative olfactory receptor str-2 to only one of the two AWC neurons. The sequence is that of Voltage-dependent calcium channel unc-36 (unc-36) from Caenorhabditis elegans.